We begin with the raw amino-acid sequence, 104 residues long: ATP-dependent Clp protease adapter protein ClpS (104 aa).

It belongs to the ClpS family. In terms of assembly, binds to the N-terminal domain of the chaperone ClpA.

Functionally, involved in the modulation of the specificity of the ClpAP-mediated ATP-dependent protein degradation. The sequence is that of ATP-dependent Clp protease adapter protein ClpS from Neisseria gonorrhoeae (strain ATCC 700825 / FA 1090).